Here is a 904-residue protein sequence, read N- to C-terminus: MSLVGRVGSLISQGVYSVATPFHPFGGAIDVIVVQQQDGSFRSTPWYVRFGKFQGVLKGAEKFVRISVNGTEADFHMYLDNSGEAYFIREVDPAANDTNNLISGSENNNGNQNNGVTYRLEHSLSDSGTGELREGFDPLSRLERTESDCNRRFYDFQDDPPSPTSEYGSARFDNLNVESYGDSQGSDSEVVLVSIDGHILTAPVSVAEQEAENLRLNTPQFHLAPGDGTEFCEGNTEFASSETPWDTEYIDKVEESSDTANIASDKVDAINDERNDLDSHSRDNAEKDSHDAERDLLGSCLEQSELTKTSENVKSEEPGPTFEDRNLKEGEFPLRTIMENDRSEDEVTIESIDTLVDSFESSTTQITIEEVKTTEGSRISVDSNADSECKDEQTSAETAILFNNQESSISVDSNADSECKDEQPRISAETAILINNQEGGIIESEDQDSERVSIDSTREEVDKDNEDRKTVVSVGVTSSVDEGEPDTDQRYELSLCKDELRQGMGLSAAAEVFDAHMISKEEYINSATSILESENLVVRIRETYMPWTKAARIVLGKAVFDLDLDIQPDDVISVEENESPKPKDDETTITPSSSGTRWRLWPIPFRRVKTVEHTGSNSSSEEDLFVDSEPGLQNSPETQSTTESRHESPRRQLVRTNVPTNEQIASLNLKDGQNMITFSFSTRVLGTQQVDAHIYRWRWDTKIVISDVDGTITKSDVLGQFMPFIGKDWTQSGVAKLFSAIKENGYQLLFLSARAIVQAYLTRNFLNNLKQDGKALPTGPVVISPDGLFPALYREVIRRAPHEFKIACLEDIRKLFPTDYNPFYAGFGNRDTDELSYRKLGIPKGKIFIINPKGEVATGHRIDVKKSYTSLHTLVNDMFPPTSLVEQEDYNPWNFWKLPIEEVE.

The N-LIP stretch occupies residues 1-112; it reads MSLVGRVGSL…SGSENNNGNQ (112 aa). Disordered regions lie at residues 254-293, 305-326, 440-470, 574-595, and 612-655; these read EESS…HDAE, ELTK…EDRN, GIIE…DRKT, VEEN…SSSG, and EHTG…QLVR. 3 stretches are compositionally biased toward basic and acidic residues: residues 265-293, 311-326, and 449-470; these read DKVD…HDAE, ENVK…EDRN, and SERV…DRKT. The span at 631–642 shows a compositional bias: polar residues; that stretch reads GLQNSPETQSTT. A C-LIP region spans residues 703-857; sequence IVISDVDGTI…FIINPKGEVA (155 aa). A DXDXT motif motif is present at residues 707 to 711; the sequence is DVDGT.

It belongs to the lipin family. Mg(2+) serves as cofactor. In terms of tissue distribution, expressed in roots, leaves, stems, flowers, siliques, embryos and mature seeds.

The protein resides in the cytoplasm. It is found in the cytosol. The enzyme catalyses a 1,2-diacyl-sn-glycero-3-phosphate + H2O = a 1,2-diacyl-sn-glycerol + phosphate. Its function is as follows. Magnesium-dependent phosphatidate phosphatase which catalyzes the dephosphorylation of phosphatidate to yield diacylglycerol. Acts redundantly with PAH2 to repress phospholipid biosynthesis at the endoplasmic reticulum (ER). May function indirectly as repressor of multiple enzymes involved in phospholipid biosynthesis. Is involved in the pathway of galactolipid synthesis in the ER, which is required for the membrane lipid remodeling, an essential adaptation mechanism to cope with phosphate starvation. In Arabidopsis thaliana (Mouse-ear cress), this protein is Phosphatidate phosphatase PAH1 (PAH1).